A 340-amino-acid chain; its full sequence is Aspartate-semialdehyde dehydrogenase (340 aa).

Residues 11–14 (TGEV) and 39–40 (RS) contribute to the NADP(+) site. Residue Arg-100 coordinates phosphate. Cys-131 functions as the Acyl-thioester intermediate in the catalytic mechanism. Gln-158 is a binding site for substrate. 161–162 (SG) contacts NADP(+). Phosphate is bound at residue Lys-216. Residue Arg-238 coordinates substrate. His-245 acts as the Proton acceptor in catalysis. An NADP(+)-binding site is contributed by Asn-318.

This sequence belongs to the aspartate-semialdehyde dehydrogenase family. In terms of assembly, homodimer.

It catalyses the reaction L-aspartate 4-semialdehyde + phosphate + NADP(+) = 4-phospho-L-aspartate + NADPH + H(+). The protein operates within amino-acid biosynthesis; L-lysine biosynthesis via DAP pathway; (S)-tetrahydrodipicolinate from L-aspartate: step 2/4. It participates in amino-acid biosynthesis; L-methionine biosynthesis via de novo pathway; L-homoserine from L-aspartate: step 2/3. Its pathway is amino-acid biosynthesis; L-threonine biosynthesis; L-threonine from L-aspartate: step 2/5. Catalyzes the NADPH-dependent formation of L-aspartate-semialdehyde (L-ASA) by the reductive dephosphorylation of L-aspartyl-4-phosphate. This chain is Aspartate-semialdehyde dehydrogenase, found in Aquifex aeolicus (strain VF5).